We begin with the raw amino-acid sequence, 191 residues long: Transcriptional regulator MET32 (191 aa).

The disordered stretch occupies residues 70–96; sequence KKENALPKPPKSSKSKPQDRRNSTGEK. Residues 85–96 show a composition bias toward basic and acidic residues; sequence KPQDRRNSTGEK. The C2H2-type 1 zinc finger occupies 98-120; the sequence is FKCAKCSLEFSRSSDLRRHEKTH. A C2H2-type 2; atypical zinc finger spans residues 126 to 150; it reads NICPQCGKGFARKDALKRHYDTLTC.

Interacts with MET4 and MET28.

The protein localises to the cytoplasm. The protein resides in the nucleus. Functionally, auxiliary transcriptional regulator of sulfur amino acid metabolism. Involved in the transcriptional activation of MET28. In Saccharomyces cerevisiae (strain ATCC 204508 / S288c) (Baker's yeast), this protein is Transcriptional regulator MET32 (MET32).